The sequence spans 1350 residues: ABC-type transporter MDR1 (1350 aa).

A compositionally biased stretch (basic and acidic residues) spans 1–11; the sequence is MDTVHEGHHGS. The interval 1–84 is disordered; that stretch reads MDTVHEGHHG…DEGEDPFAHL (84 aa). The span at 22–33 shows a compositional bias: polar residues; it reads VEVTNYEKTQLG. Residues 52–63 are compositionally biased toward basic residues; sequence KKHKSQKEKKHK. The 291-residue stretch at 121–411 folds into the ABC transmembrane type-1 1 domain; the sequence is VLSALSSIIG…VAPNIQAFTT (291 aa). 6 helical membrane passes run 124 to 144, 170 to 190, 243 to 263, 271 to 291, 350 to 370, and 380 to 400; these read ALSSIIGGALLPLMTIVFGGL, LYFLYLAIGEFVFVYIATAGF, KVGLTLTALATFITAFVVSFI, ILMSTVFAIVFTMGGMSGFIV, GSMIGFLMCYVYLNYSLAFWM, and IEVGDVLTIILSIMIGAFALG. The region spanning 446-691 is the ABC transporter 1 domain; the sequence is IELRNIRHIY…QGAYYNLVEA (246 aa). 481–488 is a binding site for ATP; the sequence is GESGSGKS. Residues 712-731 show a composition bias toward basic and acidic residues; that stretch reads KDQNLKHETTKGEQPEDGLK. Residues 712–734 form a disordered region; the sequence is KDQNLKHETTKGEQPEDGLKLAR. 6 helical membrane passes run 779 to 799, 830 to 850, 903 to 923, 929 to 949, 1014 to 1034, and 1044 to 1064; these read IGIICSVITGGGNPTQAVFFA, FMLALVQFSAFLIQGYVFAVC, LGTILSVIVTLVAAFSVSLAI, LVCISTVPILLACGFLRFWML, ASQSLIFCCTALGFWYGGTLI, and FFLCFSAVIFGAQSAGTIFSF. Residues 779–1070 enclose the ABC transmembrane type-1 2 domain; the sequence is IGIICSVITG…IFSFAPDMGK (292 aa). In terms of domain architecture, ABC transporter 2 spans 1105 to 1343; sequence IEFRDVHFRY…RGRYWELVNL (239 aa). An N-linked (GlcNAc...) asparagine glycan is attached at N1127. 1140-1147 is an ATP binding site; sequence GASGCGKS.

Belongs to the ABC transporter superfamily. ABCB family. Multidrug resistance exporter (TC 3.A.1.201) subfamily.

It localises to the cell membrane. Functionally, ABC-type transporter that is involved in the secretion of liamocins, glycolipids (also called heavy oils) composed of a single mannitol or arabitol headgroup linked to either three, four or even six 3,5-dihydroxydecanoic ester tail-groups. This is ABC-type transporter MDR1 from Aureobasidium melanogenum (Aureobasidium pullulans var. melanogenum).